A 501-amino-acid chain; its full sequence is uncharacterized protein (501 aa).

Glu-236 functions as the Proton donor in the catalytic mechanism. The Nucleophile role is filled by Glu-333.

This sequence belongs to the glycosyl hydrolase 5 (cellulase A) family.

Its subcellular location is the mitochondrion intermembrane space. This is an uncharacterized protein from Saccharomyces cerevisiae (strain ATCC 204508 / S288c) (Baker's yeast).